Reading from the N-terminus, the 536-residue chain is 2,3-bisphosphoglycerate-independent phosphoglycerate mutase (536 aa).

Residues Asp-19 and Ser-69 each contribute to the Mn(2+) site. Residue Ser-69 is the Phosphoserine intermediate of the active site. Substrate is bound by residues His-130, 160–161, Arg-192, Arg-198, 262–265, and Lys-335; these read RD and RPDR. Residues Asp-402, His-406, Asp-443, His-444, and His-461 each coordinate Mn(2+).

Belongs to the BPG-independent phosphoglycerate mutase family. As to quaternary structure, monomer. Mn(2+) serves as cofactor.

It carries out the reaction (2R)-2-phosphoglycerate = (2R)-3-phosphoglycerate. The protein operates within carbohydrate degradation; glycolysis; pyruvate from D-glyceraldehyde 3-phosphate: step 3/5. Catalyzes the interconversion of 2-phosphoglycerate and 3-phosphoglycerate. This Gloeobacter violaceus (strain ATCC 29082 / PCC 7421) protein is 2,3-bisphosphoglycerate-independent phosphoglycerate mutase.